The chain runs to 406 residues: NADH-ubiquinone oxidoreductase 49 kDa subunit (406 aa).

Belongs to the complex I 49 kDa subunit family. Complex I is composed of 45 different subunits. Component of the iron-sulfur (IP) fragment of the enzyme.

It is found in the mitochondrion inner membrane. It catalyses the reaction a ubiquinone + NADH + 5 H(+)(in) = a ubiquinol + NAD(+) + 4 H(+)(out). Core subunit of the mitochondrial membrane respiratory chain NADH dehydrogenase (Complex I) that is believed to belong to the minimal assembly required for catalysis. Complex I functions in the transfer of electrons from NADH to the respiratory chain. The immediate electron acceptor for the enzyme is believed to be ubiquinone. This chain is NADH-ubiquinone oxidoreductase 49 kDa subunit (nad7), found in Dictyostelium citrinum (Slime mold).